We begin with the raw amino-acid sequence, 94 residues long: C-X-C motif chemokine 11-1 (94 aa).

Positions 1-19 (MKTVTALLLVSLAVVAIEG) are cleaved as a signal peptide. 2 disulfide bridges follow: cysteine 27/cysteine 54 and cysteine 29/cysteine 71.

The protein belongs to the intercrine alpha (chemokine CxC) family.

Its subcellular location is the secreted. Its function is as follows. Ligand for cxcr3.2. Chemotactic for macrophages. The sequence is that of C-X-C motif chemokine 11-1 (cxcl11.1) from Danio rerio (Zebrafish).